The primary structure comprises 302 residues: uncharacterized protein (302 aa).

9 consecutive transmembrane segments (helical) span residues 1-21 (MSWI…LGVI), 33-53 (SLLF…YIYY), 67-87 (FLIE…IFQF), 101-121 (FGII…IILI), 124-144 (FSWL…KTFY), 185-205 (YVTP…VFAI), 220-240 (IIYT…FCLA), 253-273 (LALI…IAIP), and 274-294 (AYIS…ASVI).

This sequence belongs to the TerC family.

Its subcellular location is the cell membrane. This is an uncharacterized protein from Rickettsia bellii (strain RML369-C).